We begin with the raw amino-acid sequence, 402 residues long: UDP-N-acetylmuramoylalanine--D-glutamate ligase (402 aa).

97-103 (GTNGKTT) is an ATP binding site.

This sequence belongs to the MurCDEF family.

The protein localises to the cytoplasm. It catalyses the reaction UDP-N-acetyl-alpha-D-muramoyl-L-alanine + D-glutamate + ATP = UDP-N-acetyl-alpha-D-muramoyl-L-alanyl-D-glutamate + ADP + phosphate + H(+). The protein operates within cell wall biogenesis; peptidoglycan biosynthesis. Cell wall formation. Catalyzes the addition of glutamate to the nucleotide precursor UDP-N-acetylmuramoyl-L-alanine (UMA). The protein is UDP-N-acetylmuramoylalanine--D-glutamate ligase of Campylobacter jejuni (strain RM1221).